Here is a 95-residue protein sequence, read N- to C-terminus: Aspartyl/glutamyl-tRNA(Asn/Gln) amidotransferase subunit C (95 aa).

It belongs to the GatC family. Heterotrimer of A, B and C subunits.

The enzyme catalyses L-glutamyl-tRNA(Gln) + L-glutamine + ATP + H2O = L-glutaminyl-tRNA(Gln) + L-glutamate + ADP + phosphate + H(+). It catalyses the reaction L-aspartyl-tRNA(Asn) + L-glutamine + ATP + H2O = L-asparaginyl-tRNA(Asn) + L-glutamate + ADP + phosphate + 2 H(+). Allows the formation of correctly charged Asn-tRNA(Asn) or Gln-tRNA(Gln) through the transamidation of misacylated Asp-tRNA(Asn) or Glu-tRNA(Gln) in organisms which lack either or both of asparaginyl-tRNA or glutaminyl-tRNA synthetases. The reaction takes place in the presence of glutamine and ATP through an activated phospho-Asp-tRNA(Asn) or phospho-Glu-tRNA(Gln). This chain is Aspartyl/glutamyl-tRNA(Asn/Gln) amidotransferase subunit C, found in Rhizorhabdus wittichii (strain DSM 6014 / CCUG 31198 / JCM 15750 / NBRC 105917 / EY 4224 / RW1) (Sphingomonas wittichii).